Consider the following 207-residue polypeptide: uncharacterized protein (207 aa).

It localises to the mitochondrion. This is an uncharacterized protein from Marchantia polymorpha (Common liverwort).